A 117-amino-acid chain; its full sequence is MPRAVNGTIHKNRRRRILKDAKGFRGARSKLYRTAKSAVMKAGQWAYRDRRAKKRDFRKLWIIRINAAARENGLSYSVFMNSLKKLGIHMDRKSLAELAFNDREVFNSLVEKIKVAG.

Belongs to the bacterial ribosomal protein bL20 family.

Functionally, binds directly to 23S ribosomal RNA and is necessary for the in vitro assembly process of the 50S ribosomal subunit. It is not involved in the protein synthesizing functions of that subunit. The protein is Large ribosomal subunit protein bL20 of Leptospira interrogans serogroup Icterohaemorrhagiae serovar copenhageni (strain Fiocruz L1-130).